A 511-amino-acid chain; its full sequence is MSASTSRTLPPEIAESVSVMALIERGKAEGQIAGDDVRRAFEADQIPATQWKNVLRSLNQILEEEGVTLMVSAAEPKRTRKSVAAKSPAKRTATKAVAAKPVTSRKATAPAAPAAPATEPAAVEEEAPAKKAAAKKTTAKKATAKKTTAKKAAAKKTTAKKEDGELLEDEATEEPKAATEEPEGTENAGFVLSDEDEDDAPAQQVAAAGATADPVKDYLKQIGKVPLLNAEQEVELAKRIEAGLFAEDKLANSDKLAPKLKRELEIIAEDGRRAKNHLLEANLRLVVSLAKRYTGRGMLFLDLIQEGNLGLIRAVEKFDYTKGYKFSTYATWWIRQAITRAMADQARTIRIPVHMVEVINKLARVQRQMLQDLGREPTPEELAKELDMTPEKVIEVQKYGREPISLHTPLGEDGDSEFGDLIEDSEAVVPADAVSFTLLQEQLHSVLDTLSEREAGVVSMRFGLTDGQPKTLDEIGKVYGVTRERIRQIESKTMSKLRHPSRSQVLRDYLD.

Positions 72-186 (SAAEPKRTRK…AATEEPEGTE (115 aa)) are disordered. Basic residues predominate over residues 78–93 (RTRKSVAAKSPAKRTA). Over residues 94 to 121 (TKAVAAKPVTSRKATAPAAPAAPATEPA) the composition is skewed to low complexity. The span at 132-158 (AAAKKTTAKKATAKKTTAKKAAAKKTT) shows a compositional bias: basic residues. Residues 211-347 (TADPVKDYLK…ITRAMADQAR (137 aa)) form a binds RNA polymerase-binding protein RbpA region. The sigma-70 factor domain-2 stretch occupies residues 278–348 (LLEANLRLVV…TRAMADQART (71 aa)). The short motif at 302–305 (DLIQ) is the Interaction with polymerase core subunit RpoC element. A sigma-70 factor domain-3 region spans residues 357-433 (EVINKLARVQ…DSEAVVPADA (77 aa)). The segment at 446–499 (VLDTLSEREAGVVSMRFGLTDGQPKTLDEIGKVYGVTRERIRQIESKTMSKLRH) is sigma-70 factor domain-4. Residues 472-491 (LDEIGKVYGVTRERIRQIES) constitute a DNA-binding region (H-T-H motif).

This sequence belongs to the sigma-70 factor family. In terms of assembly, homotrimer (Potential). interacts transiently with the RNA polymerase core complex. Interacts with RNA polymerase-binding protein RbpA via its sigma-2 region (residues 211-347) in a free form.

Its function is as follows. Sigma factors are initiation factors that promote the attachment of RNA polymerase to specific initiation sites and are then released. This sigma factor is the primary sigma factor during exponential growth. Its activity is stimulated by RbpA. This Streptomyces coelicolor (strain ATCC BAA-471 / A3(2) / M145) protein is RNA polymerase principal sigma factor HrdB (hrdB).